A 188-amino-acid polypeptide reads, in one-letter code: Pupal cuticle protein Edg-84A (188 aa).

The N-terminal stretch at 1-17 (MLVKTALFVTLIGLAQA) is a signal peptide. The tract at residues 19-67 (PLPAKSSGSEDTYDSHPQYSFNYDVQDPETGDVKSQSESRDGDVVHGQY) is disordered. Residues 24–41 (SSGSEDTYDSHPQYSFNY) are compositionally biased toward polar residues. The region spanning 34 to 100 (HPQYSFNYDV…AVVRREPLSS (67 aa)) is the Chitin-binding type R&amp;R domain. The segment covering 49 to 62 (GDVKSQSESRDGDV) has biased composition (basic and acidic residues).

In terms of tissue distribution, imaginal (anterior) epidermis.

Component of the cuticle of the pupa of fruit fly. This Drosophila melanogaster (Fruit fly) protein is Pupal cuticle protein Edg-84A (Edg84A).